Here is a 128-residue protein sequence, read N- to C-terminus: Phosphoribosyl-AMP cyclohydrolase (128 aa).

Asp-86 is a binding site for Mg(2+). Cys-87 is a Zn(2+) binding site. Positions 88 and 90 each coordinate Mg(2+). The Zn(2+) site is built by Cys-103 and Cys-110.

This sequence belongs to the PRA-CH family. Homodimer. It depends on Mg(2+) as a cofactor. Requires Zn(2+) as cofactor.

Its subcellular location is the cytoplasm. The catalysed reaction is 1-(5-phospho-beta-D-ribosyl)-5'-AMP + H2O = 1-(5-phospho-beta-D-ribosyl)-5-[(5-phospho-beta-D-ribosylamino)methylideneamino]imidazole-4-carboxamide. Its pathway is amino-acid biosynthesis; L-histidine biosynthesis; L-histidine from 5-phospho-alpha-D-ribose 1-diphosphate: step 3/9. Functionally, catalyzes the hydrolysis of the adenine ring of phosphoribosyl-AMP. The chain is Phosphoribosyl-AMP cyclohydrolase from Roseobacter denitrificans (strain ATCC 33942 / OCh 114) (Erythrobacter sp. (strain OCh 114)).